Consider the following 531-residue polypeptide: Zinc finger protein 837 (531 aa).

Residues 1–101 (MEAPAQKAGQ…CGPTSSQNPE (101 aa)) are disordered. Residues 24 to 50 (AREKRPEEPRPLEEDRAGSRPTQKGDL) show a composition bias toward basic and acidic residues. 8 consecutive C2H2-type zinc fingers follow at residues 271-293 (YACDECGKAFTRTSSLLQHQRIH), 299-321 (YECAECGKAFVRCSGLYRHQKTH), 363-385 (YECADCAKAFGLFSHLVEHRRVH), 391-413 (YACPECGKAFNQRSNLSRHQRTH), 419-441 (YACPLCEKAFKGRSGLVQHQRAH), 447-469 (YGCSECGKTFRGCSELRQHERLH), 475-497 (YICRDCGKAFVRNCSLVRHLRTH), and 503-525 (YACGDCGRAFSQRSNLNEHRKRH).

This sequence belongs to the krueppel C2H2-type zinc-finger protein family.

It is found in the nucleus. May be involved in transcriptional regulation. The polypeptide is Zinc finger protein 837 (ZNF837) (Homo sapiens (Human)).